Consider the following 347-residue polypeptide: Protein RecA (347 aa).

67–74 (GPESSGKT) contacts ATP.

The protein belongs to the RecA family.

Its subcellular location is the cytoplasm. Functionally, can catalyze the hydrolysis of ATP in the presence of single-stranded DNA, the ATP-dependent uptake of single-stranded DNA by duplex DNA, and the ATP-dependent hybridization of homologous single-stranded DNAs. It interacts with LexA causing its activation and leading to its autocatalytic cleavage. The chain is Protein RecA from Paenarthrobacter aurescens (strain TC1).